Consider the following 121-residue polypeptide: MSQKQEEENPAEETGEEKQDTQEKEGILPERAEEAKLKAKYPSLGQKPGGSDFLMKRLQKGQKYFDSGDYNMAKAKMKNKQLPSAGPDKNLVTGDHIPTPQDLPQRKSSLVTSKLAGGQVE.

The interval 1–53 (MSQKQEEENPAEETGEEKQDTQEKEGILPERAEEAKLKAKYPSLGQKPGGSDF) is disordered. Residue Ser2 is modified to N-acetylserine. Phosphoserine is present on Ser2. Positions 16–37 (EEKQDTQEKEGILPERAEEAKL) are enriched in basic and acidic residues. Residue Thr21 is modified to Phosphothreonine. Ser43 carries the post-translational modification Phosphoserine. At Ser67 the chain carries Phosphoserine; by GWL. Residues 79-121 (NKQLPSAGPDKNLVTGDHIPTPQDLPQRKSSLVTSKLAGGQVE) are disordered. Phosphoserine; by PKA is present on Ser109.

It belongs to the endosulfine family. In terms of assembly, interacts (when phosphorylated at Ser-67) with PPP2R2D. Interacts with ABCC8. Interacts with SNCA; interaction is disrupted when phosphorylated at Ser-109. In terms of processing, phosphorylation at Ser-67 by GWL during mitosis is essential for interaction with PPP2R2D (PR55-delta) and subsequent inactivation of PP2A. Phosphorylated by PKA. Widely expressed with high levels in skeletal muscle and brain and lower levels in the pancreas.

The protein localises to the cytoplasm. Its function is as follows. Protein phosphatase inhibitor that specifically inhibits protein phosphatase 2A (PP2A) during mitosis. When phosphorylated at Ser-67 during mitosis, specifically interacts with PPP2R2D (PR55-delta) and inhibits its activity, leading to inactivation of PP2A, an essential condition to keep cyclin-B1-CDK1 activity high during M phase. Also acts as a stimulator of insulin secretion by interacting with sulfonylurea receptor (ABCC8), thereby preventing sulfonylurea from binding to its receptor and reducing K(ATP) channel currents. The polypeptide is Alpha-endosulfine (ENSA) (Homo sapiens (Human)).